The chain runs to 422 residues: Tk-subtilisin (422 aa).

The first 24 residues, 1–24 (MKKSIALVLSIVLLAALFAVPASA), serve as a signal peptide directing secretion. Residues 25-106 (GEQNTIRVIV…SWLGGGSTQP (82 aa)) constitute a propeptide that is removed on maturation. Residues 111–417 (PWGIERVKAP…YGVVRAALAV (307 aa)) form the Peptidase S8 domain. Active-site charge relay system residues include Asp-139, His-177, and Ser-348.

It belongs to the peptidase S8 family. Monomer. Ca(2+) serves as cofactor.

It localises to the secreted. In terms of biological role, has a broad substrate specificity with a slight preference to large hydrophobic amino acid residues at the P1 position. The chain is Tk-subtilisin from Thermococcus kodakarensis (strain ATCC BAA-918 / JCM 12380 / KOD1) (Pyrococcus kodakaraensis (strain KOD1)).